The sequence spans 343 residues: Pseudaminic acid synthase (343 aa).

The AFP-like domain occupies 287–343; sequence SLYASKDIKKGEIFSEENVKSVRPSFGLHPKFYQELLGKKASKDIEFGDALKESDFR.

Belongs to the pseudaminic acid synthase family. A divalent metal cation serves as cofactor.

It carries out the reaction 2,4-diacetamido-2,4,6-trideoxy-beta-L-altrose + phosphoenolpyruvate + H2O = pseudaminate + phosphate. In terms of biological role, catalyzes the fifth step in the biosynthesis of pseudaminic acid, a sialic-acid-like sugar that is used to modify flagellin. Catalyzes the condensation of phosphoenolpyruvate with 2,4-diacetamido-2,4,6-trideoxy-beta-l-altropyranose, forming pseudaminic acid. The sequence is that of Pseudaminic acid synthase (pseI) from Campylobacter jejuni subsp. jejuni serotype O:23/36 (strain 81-176).